Here is a 99-residue protein sequence, read N- to C-terminus: Small ribosomal subunit protein uS14c (99 aa).

It belongs to the universal ribosomal protein uS14 family. In terms of assembly, part of the 30S ribosomal subunit.

The protein resides in the plastid. It localises to the chloroplast. Binds 16S rRNA, required for the assembly of 30S particles. This Welwitschia mirabilis (Tree tumbo) protein is Small ribosomal subunit protein uS14c.